A 188-amino-acid chain; its full sequence is Ubiquitin-like protein 4B (188 aa).

The Ubiquitin-like domain occupies 1–76; the sequence is MFLTVKLLLG…INVIMRPPED (76 aa). Residues 146–188 form a disordered region; it reads EEKEAPAVASELEQNNGGGGGGGGTGGEGGGKKEEEEGEEADQ. Gly residues predominate over residues 161-174; sequence NGGGGGGGGTGGEG.

In terms of tissue distribution, expressed specifically in post-meiotic male germ cells of the testis. Abundantly expressed in stage 14-16 spermatids.

It localises to the cytoplasm. The protein is Ubiquitin-like protein 4B (Ubl4b) of Mus musculus (Mouse).